Consider the following 429-residue polypeptide: Adenylosuccinate synthetase (429 aa).

GTP-binding positions include 12 to 18 (GDEGKGK) and 40 to 42 (GHT). The Proton acceptor role is filled by Asp13. Asp13 and Gly40 together coordinate Mg(2+). IMP-binding positions include 13–16 (DEGK), 38–41 (NAGH), Thr130, Arg144, Gln225, Thr240, and Arg304. The Proton donor role is filled by His41. Residue 300–306 (ATTGRPR) participates in substrate binding. GTP contacts are provided by residues Arg306, 332–334 (KLD), and 414–416 (SVG).

The protein belongs to the adenylosuccinate synthetase family. As to quaternary structure, homodimer. The cofactor is Mg(2+).

The protein resides in the cytoplasm. The catalysed reaction is IMP + L-aspartate + GTP = N(6)-(1,2-dicarboxyethyl)-AMP + GDP + phosphate + 2 H(+). It participates in purine metabolism; AMP biosynthesis via de novo pathway; AMP from IMP: step 1/2. Functionally, plays an important role in the de novo pathway of purine nucleotide biosynthesis. Catalyzes the first committed step in the biosynthesis of AMP from IMP. This is Adenylosuccinate synthetase from Syntrophobacter fumaroxidans (strain DSM 10017 / MPOB).